We begin with the raw amino-acid sequence, 127 residues long: Glycine cleavage system H protein (127 aa).

One can recognise a Lipoyl-binding domain in the interval 22–104 (EVVIGITHFA…YEGAWMVKVE (83 aa)). An N6-lipoyllysine modification is found at lysine 63.

It belongs to the GcvH family. As to quaternary structure, the glycine cleavage system is composed of four proteins: P, T, L and H. (R)-lipoate is required as a cofactor.

Functionally, the glycine cleavage system catalyzes the degradation of glycine. The H protein shuttles the methylamine group of glycine from the P protein to the T protein. Is also involved in protein lipoylation via its role as an octanoyl/lipoyl carrier protein intermediate. In Bacillus cereus (strain ZK / E33L), this protein is Glycine cleavage system H protein.